Here is a 187-residue protein sequence, read N- to C-terminus: MNHEELINSLTKKMNGALQVLDADLKGLRVGQASAYFLDPVQVEAYNSKVPILQVATISVSDTKTILVQVWDKSLVKAVKKAIMEANLGVSIISDDNQIIRLQLPIPSEERRKELVKIAHKYQEKSKIIVRNIRRDGIELIKQMEQNTECSKDEAHIYSKEIQELTDKYCDKIDKIIKLKEQDIINL.

The protein belongs to the RRF family.

It is found in the cytoplasm. Its function is as follows. Responsible for the release of ribosomes from messenger RNA at the termination of protein biosynthesis. May increase the efficiency of translation by recycling ribosomes from one round of translation to another. The sequence is that of Ribosome-recycling factor from Orientia tsutsugamushi (strain Ikeda) (Rickettsia tsutsugamushi).